Reading from the N-terminus, the 126-residue chain is Small ribosomal subunit protein uS8 (126 aa).

The protein belongs to the universal ribosomal protein uS8 family. Part of the 30S ribosomal subunit. Contacts proteins S5 and S12.

In terms of biological role, one of the primary rRNA binding proteins, it binds directly to 16S rRNA central domain where it helps coordinate assembly of the platform of the 30S subunit. This is Small ribosomal subunit protein uS8 from Desulfovibrio desulfuricans (strain ATCC 27774 / DSM 6949 / MB).